The primary structure comprises 438 residues: Adenosylhomocysteinase (438 aa).

Residues T61, D137, and E162 each contribute to the substrate site. 163–165 (TTT) is a binding site for NAD(+). Substrate-binding residues include K192 and D196. NAD(+) is bound by residues N197, 226-231 (GYGDVG), E249, N284, 305-307 (IGH), and N352.

The protein belongs to the adenosylhomocysteinase family. The cofactor is NAD(+).

It is found in the cytoplasm. The enzyme catalyses S-adenosyl-L-homocysteine + H2O = L-homocysteine + adenosine. The protein operates within amino-acid biosynthesis; L-homocysteine biosynthesis; L-homocysteine from S-adenosyl-L-homocysteine: step 1/1. In terms of biological role, may play a key role in the regulation of the intracellular concentration of adenosylhomocysteine. The protein is Adenosylhomocysteinase of Flavobacterium johnsoniae (strain ATCC 17061 / DSM 2064 / JCM 8514 / BCRC 14874 / CCUG 350202 / NBRC 14942 / NCIMB 11054 / UW101) (Cytophaga johnsonae).